Consider the following 448-residue polypeptide: MANVVENLGKLERRVTISLPKDAVQKEVDSRIRQLAKNVRMPGFRPGKVPLKMVTQQYSGQVEAEVLSDKVGKEFFDISRAENLRVAGQPSFAPKTDATEGDYAFDATFEVYPEVKLGDVATAEIERTTTTISEAEIDRTLDILRKQRVHFHARGEAGEHGDGGGDTAAKEGDRVTVDFVGKIEGEVFQGGSADDFAFVLGEGRMLPEFEKAATGLKVGESKEFDLAFPEDYHGKEVAGKTAQFTITMKKIEWPHLPEIDAEFAKSLGIEDGDLTKMRAEIKDNLEREAKRRTQAIVKNQVMDALLKISELDVPNALIEQDQERLVAMARQDLEQRGVPNAKDAPIPAAMFKEQAERRVKLGLVLAELVKANELQAKPEQIRAEVDEFAKSYEDPKEVVRWYYSNQQRLAEMEAYVVEANVVEFVLSKAKVTDKEVSFEELASATAQA.

A PPIase FKBP-type domain is found at 172-257; that stretch reads GDRVTVDFVG…MKKIEWPHLP (86 aa).

It belongs to the FKBP-type PPIase family. Tig subfamily.

It is found in the cytoplasm. The enzyme catalyses [protein]-peptidylproline (omega=180) = [protein]-peptidylproline (omega=0). In terms of biological role, involved in protein export. Acts as a chaperone by maintaining the newly synthesized protein in an open conformation. Functions as a peptidyl-prolyl cis-trans isomerase. The sequence is that of Trigger factor from Paraburkholderia xenovorans (strain LB400).